Here is a 293-residue protein sequence, read N- to C-terminus: Fructokinase (293 aa).

Thr133 contacts ATP. Zn(2+) contacts are provided by His156, Cys174, His177, and Cys180. ATP contacts are provided by residues Pro188 and 236–240 (GVMAQ).

It belongs to the ROK (NagC/XylR) family. Requires Mg(2+) as cofactor.

The catalysed reaction is D-fructose + ATP = D-fructose 6-phosphate + ADP + H(+). Inhibition by zinc ions. This Streptococcus mutans serotype c (strain ATCC 700610 / UA159) protein is Fructokinase (scrK).